The primary structure comprises 30 residues: Ribosome-inactivating protein momorcochin-S (30 aa).

Belongs to the ribosome-inactivating protein family. Type 1 RIP subfamily. Post-translationally, glycosylated.

It carries out the reaction Endohydrolysis of the N-glycosidic bond at one specific adenosine on the 28S rRNA.. Inactivates eukaryotic 60S ribosomal subunits. This chain is Ribosome-inactivating protein momorcochin-S, found in Momordica cochinchinensis (Spiny bitter cucumber).